The chain runs to 344 residues: Beta-1,4-galactosyltransferase 4 (344 aa).

The Cytoplasmic portion of the chain corresponds to 1 to 12; that stretch reads MGCNPPYLLSYR. The chain crosses the membrane as a helical; Signal-anchor for type II membrane protein span at residues 13 to 38; sequence LRLLLLFTLCLTVLGWATSNYFVGAI. Residues 39–344 are Lumenal-facing; that stretch reads QVIPRAKNFM…NITVDFWTAA (306 aa). Cys77 and Cys118 are oxidised to a cystine. UDP-alpha-D-galactose-binding positions include 129-133, 168-170, and 195-196; these read PHRNR, FNR, and VD. Cys189 and Cys208 are joined by a disulfide. Mn(2+) is bound at residue Asp196. An N-linked (GlcNAc...) asparagine glycan is attached at Asn220. The UDP-alpha-D-galactose site is built by Tyr224 and Trp256. 258–261 serves as a coordination point for N-acetyl-D-glucosamine; sequence GEDD. Position 289 (His289) interacts with Mn(2+). 289–291 is a UDP-alpha-D-galactose binding site; sequence HTR. Arg301 lines the N-acetyl-D-glucosamine pocket. Asn335 carries N-linked (GlcNAc...) asparagine glycosylation.

The protein belongs to the glycosyltransferase 7 family. Interacts with SLC35A2/UGT1. Mn(2+) serves as cofactor.

It localises to the golgi apparatus membrane. Its subcellular location is the secreted. The enzyme catalyses N-acetyl-D-glucosamine + UDP-alpha-D-galactose = beta-D-galactosyl-(1-&gt;4)-N-acetyl-D-glucosamine + UDP + H(+). It catalyses the reaction a beta-D-GlcNAc-(1-&gt;3)-beta-D-Gal-(1-&gt;4)-beta-D-Glc-(1&lt;-&gt;1)-Cer(d18:1(4E)) + UDP-alpha-D-galactose = a neolactoside nLc4Cer(d18:1(4E)) + UDP + H(+). The catalysed reaction is 3-O-{beta-D-galactosyl-(1-&gt;3)-[6-O-sulfo-N-acetyl-beta-D-glucosaminyl-(1-&gt;6)]-N-acetyl-alpha-D-galactosaminyl}-L-seryl-[protein] + UDP-alpha-D-galactose = 3-O-{beta-D-galactosyl-(1-&gt;3)-[beta-D-galactosyl-(1-&gt;4)-6-O-sulfo-N-acetyl-beta-D-glucosaminyl-(1-&gt;6)]-N-acetyl-alpha-D-galactosaminyl}-L-seryl-[protein] + UDP + H(+). It carries out the reaction 3-O-{beta-D-galactosyl-(1-&gt;3)-[6-O-sulfo-N-acetyl-beta-D-glucosaminyl-(1-&gt;6)]-N-acetyl-alpha-D-galactosaminyl}-L-threonyl-[protein] + UDP-alpha-D-galactose = 3-O-{beta-D-galactosyl-(1-&gt;3)-[beta-D-galactosyl-(1-&gt;4)-6-O-sulfo-N-acetyl-beta-D-glucosaminyl-(1-&gt;6)]-N-acetyl-alpha-D-galactosaminyl}-L-threonyl-[protein] + UDP + H(+). Its pathway is protein modification; protein glycosylation. It participates in glycolipid biosynthesis. Galactose (Gal) transferase involved in the synthesis of terminal N-acetyllactosamine (LacNac) unit present on glycan chains of glycoproteins and glycosphingolipids. Catalyzes the transfer of Gal residue via a beta1-&gt;4 linkage from UDP-Gal to the non-reducing terminal N-acetyl glucosamine 6-O-sulfate (6-O-sulfoGlcNAc) in the linearly growing chain of both N- and O-linked keratan sulfate proteoglycans. Cooperates with B3GNT7 N-acetyl glucosamine transferase and CHST6 and CHST1 sulfotransferases to construct and elongate mono- and disulfated disaccharide units [-&gt;3Galbeta1-&gt;4(6-sulfoGlcNAcbeta)1-&gt;] and [-&gt;3(6-sulfoGalbeta)1-&gt;4(6-sulfoGlcNAcbeta)1-&gt;] within keratan sulfate polymer. Transfers Gal residue via a beta1-&gt;4 linkage to terminal 6-O-sulfoGlcNAc within the LacNac unit of core 2 O-glycans forming 6-sulfo-sialyl-Lewis X (sLex). May contribute to the generation of sLex epitope on mucin-type glycoproteins that serve as ligands for SELL/L-selectin, a major regulator of leukocyte migration. In the biosynthesis pathway of neolacto-series glycosphingolipids, transfers Gal residue via a beta1-&gt;4 linkage to terminal GlcNAc of a lactotriaosylceramide (Lc3Cer) acceptor to form a neolactotetraosylceramide. This Rattus norvegicus (Rat) protein is Beta-1,4-galactosyltransferase 4 (B4galt4).